The chain runs to 205 residues: Protein phosphatase inhibitor 2 family member B (205 aa).

The interval 1-44 (MAASTASHRPIKGILKNKTSTTSSMVASAEQPRRSVDEELSKKS) is disordered. Residue Ala-2 is modified to N-acetylalanine. Required for binding PPP1CC regions lie at residues 12–17 (KGILKN) and 43–55 (KSQK…ILAT). The span at 17 to 26 (NKTSTTSSMV) shows a compositional bias: polar residues. Residues 31 to 44 (QPRRSVDEELSKKS) show a composition bias toward basic and acidic residues. Ser-44 is subject to Phosphoserine. 2 positions are modified to phosphothreonine: Thr-89 and Thr-92. The disordered stretch occupies residues 111–142 (EPKYRIQEQESSGEEDSDLSPEEREKKRQFEM). Residues Ser-121, Ser-122, Ser-127, and Ser-130 each carry the phosphoserine modification. The span at 121–130 (SSGEEDSDLS) shows a compositional bias: acidic residues. The segment covering 131–142 (PEEREKKRQFEM) has biased composition (basic and acidic residues). Residues 147-150 (HYNE) are required for binding PPP1CC catalytic center, displacing metal ions and inhibition of PPP1CC catalytic activity. The interval 163–205 (KDLHDDDEDEEMLETADGESMNTEESNQGSTPSDQQQNKLRSS) is disordered. The segment covering 167–179 (DDDEDEEMLETAD) has biased composition (acidic residues). The span at 182–205 (SMNTEESNQGSTPSDQQQNKLRSS) shows a compositional bias: polar residues.

Belongs to the protein phosphatase inhibitor 2 family. Interacts with PPP1CC. Only detected in spermatozoa, both heads and tails.

Functionally, inhibitor of protein-phosphatase 1. The chain is Protein phosphatase inhibitor 2 family member B from Homo sapiens (Human).